A 337-amino-acid polypeptide reads, in one-letter code: Large ribosomal subunit protein uL10 (337 aa).

Positions 309–337 are disordered; it reads EEVVEEQEEVKEEEEEESDMASGLGALFG. Positions 310–327 are enriched in acidic residues; sequence EVVEEQEEVKEEEEEESD.

This sequence belongs to the universal ribosomal protein uL10 family. Part of the 50S ribosomal subunit. Forms part of the ribosomal stalk which helps the ribosome interact with GTP-bound translation factors. Forms a heptameric L10(L12)2(L12)2(L12)2 complex, where L10 forms an elongated spine to which the L12 dimers bind in a sequential fashion.

Forms part of the ribosomal stalk, playing a central role in the interaction of the ribosome with GTP-bound translation factors. In Methanococcoides burtonii (strain DSM 6242 / NBRC 107633 / OCM 468 / ACE-M), this protein is Large ribosomal subunit protein uL10.